A 425-amino-acid chain; its full sequence is Serine--tRNA ligase (425 aa).

T230–E232 contributes to the L-serine binding site. R261–E263 provides a ligand contact to ATP. E284 is an L-serine binding site. E348 to S351 contributes to the ATP binding site. S384 contacts L-serine.

Belongs to the class-II aminoacyl-tRNA synthetase family. Type-1 seryl-tRNA synthetase subfamily. In terms of assembly, homodimer. The tRNA molecule binds across the dimer.

Its subcellular location is the cytoplasm. The enzyme catalyses tRNA(Ser) + L-serine + ATP = L-seryl-tRNA(Ser) + AMP + diphosphate + H(+). It catalyses the reaction tRNA(Sec) + L-serine + ATP = L-seryl-tRNA(Sec) + AMP + diphosphate + H(+). It functions in the pathway aminoacyl-tRNA biosynthesis; selenocysteinyl-tRNA(Sec) biosynthesis; L-seryl-tRNA(Sec) from L-serine and tRNA(Sec): step 1/1. Functionally, catalyzes the attachment of serine to tRNA(Ser). Is also able to aminoacylate tRNA(Sec) with serine, to form the misacylated tRNA L-seryl-tRNA(Sec), which will be further converted into selenocysteinyl-tRNA(Sec). The polypeptide is Serine--tRNA ligase (Streptococcus pyogenes serotype M28 (strain MGAS6180)).